The sequence spans 370 residues: Peptide chain release factor 1 (370 aa).

Gln-239 is modified (N5-methylglutamine).

This sequence belongs to the prokaryotic/mitochondrial release factor family. In terms of processing, methylated by PrmC. Methylation increases the termination efficiency of RF1.

Its subcellular location is the cytoplasm. In terms of biological role, peptide chain release factor 1 directs the termination of translation in response to the peptide chain termination codons UAG and UAA. This is Peptide chain release factor 1 from Bacteroides thetaiotaomicron (strain ATCC 29148 / DSM 2079 / JCM 5827 / CCUG 10774 / NCTC 10582 / VPI-5482 / E50).